The primary structure comprises 124 residues: Large ribosomal subunit protein bL12 (124 aa).

A disordered region spans residues 99 to 124 (KEGMNKEDAEKAKADLEAAGAKVELK). The segment covering 101–114 (GMNKEDAEKAKADL) has biased composition (basic and acidic residues). Low complexity predominate over residues 115-124 (EAAGAKVELK).

Belongs to the bacterial ribosomal protein bL12 family. As to quaternary structure, homodimer. Part of the ribosomal stalk of the 50S ribosomal subunit. Forms a multimeric L10(L12)X complex, where L10 forms an elongated spine to which 2 to 4 L12 dimers bind in a sequential fashion. Binds GTP-bound translation factors.

Its function is as follows. Forms part of the ribosomal stalk which helps the ribosome interact with GTP-bound translation factors. Is thus essential for accurate translation. The polypeptide is Large ribosomal subunit protein bL12 (Campylobacter hominis (strain ATCC BAA-381 / DSM 21671 / CCUG 45161 / LMG 19568 / NCTC 13146 / CH001A)).